A 327-amino-acid chain; its full sequence is Thiamine-monophosphate kinase (327 aa).

Mg(2+) is bound by residues Asp30, Ser45, Ser46, and Asp47. His54 is a substrate binding site. Asp76 is a Mg(2+) binding site. Residues Tyr106, 123 to 124 (GD), and Arg149 contribute to the ATP site. Asp124 contacts Mg(2+). Residue Asp221 coordinates Mg(2+). Ser223 contacts ATP. Mg(2+) is bound at residue Asp224. Residues Glu268 and Phe321 each contribute to the substrate site.

It belongs to the thiamine-monophosphate kinase family.

The catalysed reaction is thiamine phosphate + ATP = thiamine diphosphate + ADP. The protein operates within cofactor biosynthesis; thiamine diphosphate biosynthesis; thiamine diphosphate from thiamine phosphate: step 1/1. Its function is as follows. Catalyzes the ATP-dependent phosphorylation of thiamine-monophosphate (TMP) to form thiamine-pyrophosphate (TPP), the active form of vitamin B1. The protein is Thiamine-monophosphate kinase of Synechococcus elongatus (strain ATCC 33912 / PCC 7942 / FACHB-805) (Anacystis nidulans R2).